Consider the following 98-residue polypeptide: MELKMNLQLFAQKKGTGSSKNGRDSISKRLGVKRHGGQQVNAGNIIVRQRGTKFHPGENVGIGKDDTLFAKADGVVTFEQVGKKKKRVCVYPEPAMAE.

Positions 1–10 (MELKMNLQLF) are excised as a propeptide. Residues 11–30 (AQKKGTGSSKNGRDSISKRL) form a disordered region.

It belongs to the bacterial ribosomal protein bL27 family. The N-terminus is cleaved by ribosomal processing cysteine protease Prp.

This Natranaerobius thermophilus (strain ATCC BAA-1301 / DSM 18059 / JW/NM-WN-LF) protein is Large ribosomal subunit protein bL27.